The sequence spans 139 residues: Large ribosomal subunit protein uL16 (139 aa).

The protein belongs to the universal ribosomal protein uL16 family. Part of the 50S ribosomal subunit.

In terms of biological role, binds 23S rRNA and is also seen to make contacts with the A and possibly P site tRNAs. The sequence is that of Large ribosomal subunit protein uL16 from Rippkaea orientalis (strain PCC 8801 / RF-1) (Cyanothece sp. (strain PCC 8801)).